Here is a 295-residue protein sequence, read N- to C-terminus: Cuticle collagen 3A3 (295 aa).

Residues 81–278 form a disordered region; it reads AITSSEENGG…GRPGEPGICP (198 aa). Pro residues-rich tracts occupy residues 97-109 and 146-160; these read PGPP…PGRP and AGPP…PPGD. 3 triple-helical region regions span residues 98–127, 147–203, and 212–277; these read GPPG…PGLP, GPPG…VGED, and GDQG…PGIC. The span at 172–182 shows a compositional bias: low complexity; the sequence is QDGIPGQQGTK. The span at 217–228 shows a compositional bias: pro residues; sequence PGEPGPEGPPGE. Positions 229-244 are enriched in low complexity; sequence PGLQGPVGMPGQVGQK. Residues 261–271 show a composition bias toward pro residues; the sequence is RPGPPGPPGRP.

It belongs to the cuticular collagen family.

Its function is as follows. Nematode cuticles are composed largely of collagen-like proteins. The cuticle functions both as an exoskeleton and as a barrier to protect the worm from its environment. The polypeptide is Cuticle collagen 3A3 (3A3) (Haemonchus contortus (Barber pole worm)).